Here is a 444-residue protein sequence, read N- to C-terminus: MHILVVSVNYRTAPVEFREKLTFQAAELERAMTTLQNQKSVLENVIVSTCNRTEIYAVVDQLHTGRYYIKKFLADWFQLEIEEVAPYLTIFEQDGAIDHLFRVTCGLDSMVVGETQILGQIKDSFLEAQQVKATGTIFNELFKQVITLAKRAHSETTIGESAMSVSYAAVELGKKIFGELTDCHVLILGAGKMGELALQNLYGSGARKVTVMNRTLSKAEIMAEKYMGHAKPLSELQCALLEADILISSTGASDYVITKEMMTKVEKMRSGRPLFMVDIAVPRDIDPAIDELEGSFLYDIDDLQGVVEANRAERLKEAEKIQFMIEEEIVLFKTWLSTLGVVPLISALRDKALAIQSETMESLERKIPNLSDRERKVISKHTKSIINQLLKDPILVAKEIAAEEGADEKLALFAKIFDLEMEDVESRAEEVEHKRVWTPSVPSL.

Residues 49-52 (TCNR), Ser-109, 114-116 (ETQ), and Gln-120 each bind substrate. Cys-50 acts as the Nucleophile in catalysis. 189-194 (GAGKMG) is an NADP(+) binding site.

This sequence belongs to the glutamyl-tRNA reductase family. Homodimer.

It catalyses the reaction (S)-4-amino-5-oxopentanoate + tRNA(Glu) + NADP(+) = L-glutamyl-tRNA(Glu) + NADPH + H(+). Its pathway is porphyrin-containing compound metabolism; protoporphyrin-IX biosynthesis; 5-aminolevulinate from L-glutamyl-tRNA(Glu): step 1/2. Catalyzes the NADPH-dependent reduction of glutamyl-tRNA(Glu) to glutamate 1-semialdehyde (GSA). This chain is Glutamyl-tRNA reductase, found in Bacillus anthracis (strain A0248).